The chain runs to 387 residues: Putative odorant receptor 19b (387 aa).

Topologically, residues 1–40 (MDISKVDSTRALVNHWRIFRIMGIHPPGKRTFWGRHYTAY) are cytoplasmic. A helical transmembrane segment spans residues 41–61 (SMVWNVTFHICIWVSFSVNLL). The Extracellular portion of the chain corresponds to 62–71 (QSNSLETFCE). Residues 72 to 92 (SLCVTMPHTLYMLKLINVRRM) traverse the membrane as a helical segment. Topologically, residues 93–127 (RGEMISSHWLLRLLDKRLGCADERQIIMAGIERAE) are cytoplasmic. Residues 128-148 (FIFRTIFRGLACTVVLGIIYI) traverse the membrane as a helical segment. The Extracellular segment spans residues 149–171 (SASSEPTLMYPTWIPWNWKDSTS). The chain crosses the membrane as a helical span at residues 172–192 (AYLATAMLHTTALMANATLVL). Residues 193 to 254 (NLSSYPGTYL…LRLFKSLERS (62 aa)) lie on the Cytoplasmic side of the membrane. A helical transmembrane segment spans residues 255 to 275 (LSMTCFLQFFSTACAQCTICY). Topologically, residues 276–285 (FLLFGNVGIM) are extracellular. Residues 286–306 (RFMNMLFLLVILTTETLLLCY) traverse the membrane as a helical segment. Residues 307-336 (TAELPCKEGESLLTAVYSCNWLSQSVNFRR) lie on the Cytoplasmic side of the membrane. Residues 337 to 357 (LLLLMLARCQIPMILVSGVIV) form a helical membrane-spanning segment. Topologically, residues 358–387 (PISMKTFTVMIKGAYTMLTLLNEIRKTSLE) are extracellular.

This sequence belongs to the insect chemoreceptor superfamily. Heteromeric odorant receptor channel (TC 1.A.69) family. Or2a subfamily. Interacts with Orco. Complexes exist early in the endomembrane system in olfactory sensory neurons (OSNs), coupling these complexes to the conserved ciliary trafficking pathway.

It is found in the cell membrane. Odorant receptor which mediates acceptance or avoidance behavior, depending on its substrates. The odorant receptor repertoire encodes a large collection of odor stimuli that vary widely in identity, intensity, and duration. May form a complex with Orco to form odorant-sensing units, providing sensitive and prolonged odorant signaling and calcium permeability. This chain is Putative odorant receptor 19b, found in Drosophila melanogaster (Fruit fly).